The primary structure comprises 493 residues: Glycosyltransferase alg8 (493 aa).

4 helical membrane passes run 13–32 (GWLF…PTSI), 47–69 (VGIW…LYIV), 380–402 (LTVA…LLWI), and 422–444 (PAYP…YVFF).

Belongs to the glycosyltransferase 2 family.

Its subcellular location is the cell membrane. Its pathway is glycan biosynthesis; alginate biosynthesis. Functionally, possibly a processive enzyme that polymerizes GDP-mannuronic acid. The protein is Glycosyltransferase alg8 (alg8) of Pseudomonas syringae pv. tomato (strain ATCC BAA-871 / DC3000).